A 1021-amino-acid polypeptide reads, in one-letter code: Collagenase ColH (1021 aa).

A signal peptide spans 1-30 (MKRKCLSKRLMLAITMATIFTVNSTLPIYA). Positions 31–40 (AVDKNNATAA) are excised as a propeptide. Positions 41-320 (VQNESKRYTV…SADQIKRHYD (280 aa)) are activator domain. The interval 41 to 717 (VQNESKRYTV…TYDVVFHGYL (677 aa)) is S1 metalloprotease domain. Residues 330 to 601 (PLDKFKKEGK…MQERIDNYEN (272 aa)) are catalytic subdomain. Zn(2+) is bound at residue Asp421. Glu430 contacts Ca(2+). Residue His455 coordinates Zn(2+). Residue Glu456 is part of the active site. His459 provides a ligand contact to Zn(2+). Residues Gly463, Val467, and Gly469 each contribute to the Ca(2+) site. Glu487 provides a ligand contact to Zn(2+). The interval 609 to 721 (DDYLVRHAYK…VFHGYLPNEG (113 aa)) is helper subdomain. The interval 718–810 (PNEGDSKNSL…VSTTTAEIKD (93 aa)) is S2a domain. Ca(2+)-binding residues include Asn725, Ser726, Asp753, Asp755, Asp794, Asn814, Lys815, Asp842, Asp844, Asp884, Glu908, Glu910, Asn912, Asn913, Thr931, Asp937, Gln938, and Asp939. One can recognise a PKD 1 domain in the interval 727 to 808 (LPYGKINGTY…SSVSTTTAEI (82 aa)). An S2b domain region spans residues 811-904 (LSENKLPVIY…KIKITDPVYP (94 aa)). In terms of domain architecture, PKD 2 spans 816-905 (LPVIYMHVPK…IKITDPVYPI (90 aa)). Residues 903 to 922 (YPIGTEKEPNNSKETASGPI) form a disordered region. Positions 905-1021 (IGTEKEPNNS…RINIEGSVGR (117 aa)) are S3 collagen-binding domain. Residues 1002-1004 (YMF) form a collagen-binding region.

It belongs to the peptidase M9B family. Collagenase subfamily. The cofactor is Ca(2+). Zn(2+) serves as cofactor. Post-translationally, upon purification gives rise to 98 kDa, 105 kDa and 116 kDa (full-length) proteins, all of which have the same N-terminus.

The protein localises to the secreted. The enzyme catalyses Digestion of native collagen in the triple helical region at Xaa-|-Gly bonds. With synthetic peptides, a preference is shown for Gly at P3 and P1', Pro and Ala at P2 and P2', and hydroxyproline, Ala or Arg at P3'.. Its activity is regulated as follows. Inhibited by EDTA. Inhibited by 1-10-phenanthroline. Inhibited by broad-spectrum zinc metalloprotease inhibitor batimastat. N-aryl mercaptoacetamide-based inhibitors have been isolated that act on clostridial collagenases with submicromolar affinity while having negligibile activity on human collagenases. Functionally, clostridial collagenases are among the most efficient degraders of eukaryotic collagen known; saprophytes use collagen as a carbon source while pathogens additionally digest collagen to aid in host colonization. Has both tripeptidylcarboxypeptidase on Gly-X-Y and endopeptidase activities; the endopeptidase cuts within the triple helix region of collagen while tripeptidylcarboxypeptidase successively digests the exposed ends, thus clostridial collagenases can digest large sections of collagen. The full-length protein has collagenase activity, while both the 116 kDa and 98 kDa forms act on gelatin. In vitro digestion of soluble calf skin collagen fibrils requires both ColG and ColH; ColG forms missing the second collagen-binding domain is also synergistic with ColH, although their overall efficiency is decreased. Digestion of collagen requires Ca(2+) and is inhibited by EDTA. The activator domain (residues 119-388) and catalytic subdomain (330-601) open and close around substrate allowing digestion when the protein is closed. This is Collagenase ColH from Hathewaya histolytica (Clostridium histolyticum).